We begin with the raw amino-acid sequence, 732 residues long: Catalase-peroxidase (732 aa).

The segment at residues 97–220 (WHSAGTYRTS…LAAVQMGLIY (124 aa)) is a cross-link (tryptophyl-tyrosyl-methioninium (Trp-Tyr) (with M-246)). His-98 serves as the catalytic Proton acceptor. The segment at residues 220-246 (YVNPEGPDGNPDPVAAGRDIRETFARM) is a cross-link (tryptophyl-tyrosyl-methioninium (Tyr-Met) (with W-97)). His-261 provides a ligand contact to heme b.

The protein belongs to the peroxidase family. Peroxidase/catalase subfamily. As to quaternary structure, homodimer or homotetramer. The cofactor is heme b. In terms of processing, formation of the three residue Trp-Tyr-Met cross-link is important for the catalase, but not the peroxidase activity of the enzyme.

The catalysed reaction is H2O2 + AH2 = A + 2 H2O. It catalyses the reaction 2 H2O2 = O2 + 2 H2O. Bifunctional enzyme with both catalase and broad-spectrum peroxidase activity. In Pelodictyon phaeoclathratiforme (strain DSM 5477 / BU-1), this protein is Catalase-peroxidase.